Reading from the N-terminus, the 705-residue chain is Ribosomal RNA large subunit methyltransferase K/L (705 aa).

In terms of domain architecture, THUMP spans 43–154 (VVYRCCLWSR…GEKGILGFDL (112 aa)).

Belongs to the methyltransferase superfamily. RlmKL family.

The protein resides in the cytoplasm. The enzyme catalyses guanosine(2445) in 23S rRNA + S-adenosyl-L-methionine = N(2)-methylguanosine(2445) in 23S rRNA + S-adenosyl-L-homocysteine + H(+). The catalysed reaction is guanosine(2069) in 23S rRNA + S-adenosyl-L-methionine = N(2)-methylguanosine(2069) in 23S rRNA + S-adenosyl-L-homocysteine + H(+). Functionally, specifically methylates the guanine in position 2445 (m2G2445) and the guanine in position 2069 (m7G2069) of 23S rRNA. The protein is Ribosomal RNA large subunit methyltransferase K/L of Aliivibrio fischeri (strain MJ11) (Vibrio fischeri).